The sequence spans 484 residues: MSLHDAYHWPSRTPSRKGSNIKLNKTLQDHLDELEEQFTIPTELLHRVTDRFVSELYKGLTTNPGDVPMVPTWIIGTPDGNEHGSYLALDLGGTNLRVCAVEVQGNGKFDITQSKYRLPQELKVGTREALFDYIADCIKKFVEEVHPGKSQNLEIGFTFSYPCVQRSINDASLVAWTKGFDIDGVEGESVGPLLSAALKRVGCNNVRLNAILSDTTGTLVASNYASPGTEIGVIFGTGCNACYIEKFSEIPKLHKYDFPEDMNMIINCEWCDFDNQHVVLPRTKYDVAIDEESPRPGLQTYEKMIAGCYLGDILRRILLDLYEQGALFNGQDVTKIRDPLAMDTSVLSAIEVDPFENLDETQTLFEETYGLKTTEEERQFIRRACELIGTRSARLSACGVCALVRKMNKPSMIVGTDGSVYNLYPRFKDRLAQAFKDILGEEIGSKVVTIPAEDGSGVGAALVSALEAKGKALTSDILAEHLKN.

In terms of domain architecture, Hexokinase spans 25-465; sequence KTLQDHLDEL…SGVGAALVSA (441 aa). Positions 79-212 are hexokinase small subdomain; it reads DGNEHGSYLA…CNNVRLNAIL (134 aa). 90 to 95 serves as a coordination point for ATP; sequence DLGGTN. Substrate-binding positions include 160–161, 177–178, and 213–214; these read SY, TK, and SD. The segment at 213 to 454 is hexokinase large subdomain; sequence SDTTGTLVAS…SKVVTIPAED (242 aa). Thr237 is an ATP binding site. Asn240, Glu269, and Glu302 together coordinate substrate. ATP is bound by residues 307 to 308, 344 to 348, and 419 to 423; these read GC, TSVLS, and SVYNL.

The protein belongs to the hexokinase family. As to quaternary structure, monomer.

The enzyme catalyses a D-hexose + ATP = a D-hexose 6-phosphate + ADP + H(+). The catalysed reaction is D-mannose + ATP = D-mannose 6-phosphate + ADP + H(+). It carries out the reaction D-fructose + ATP = D-fructose 6-phosphate + ADP + H(+). It catalyses the reaction D-glucose + ATP = D-glucose 6-phosphate + ADP + H(+). Its pathway is carbohydrate metabolism; hexose metabolism. The protein operates within carbohydrate degradation; glycolysis; D-glyceraldehyde 3-phosphate and glycerone phosphate from D-glucose: step 1/4. Functionally, catalyzes the phosphorylation of hexose (six-carbon sugars) to hexose 6-phosphate. Phosphorylates D-fructose, D-mannose and, to a lower extent, D-glucose. Compared to hxk2, has low affinity for D-glucose. In Schizosaccharomyces pombe (strain 972 / ATCC 24843) (Fission yeast), this protein is Hexokinase-1.